Consider the following 71-residue polypeptide: UPF0352 protein Swoo_2786 (71 aa).

This sequence belongs to the UPF0352 family.

This is UPF0352 protein Swoo_2786 from Shewanella woodyi (strain ATCC 51908 / MS32).